The primary structure comprises 106 residues: Cytochrome c oxidase assembly protein COX16 homolog, mitochondrial (106 aa).

The Mitochondrial matrix segment spans residues 1–15 (MIAPAVLRALRKNKT). A helical transmembrane segment spans residues 16 to 33 (LRYGVPMLLLVVGGSFGL). The Mitochondrial intermembrane portion of the chain corresponds to 34-106 (REFSQIRYDA…NPETLKPKTT (73 aa)). A disordered region spans residues 81–106 (IRGPRPWEDPQLLQGRNPETLKPKTT).

It belongs to the COX16 family. Associates with the MITRAC complex. Interacts with MT-CO2/COX; specifically interacts with newly synthesized MT-CO2/COX. Interacts with SCO1, SCO2 and COA6.

The protein localises to the mitochondrion inner membrane. Functionally, required for the assembly of the mitochondrial respiratory chain complex IV (CIV), also known as cytochrome c oxidase. Promotes the insertion of copper into the active site of cytochrome c oxidase subunit II (MT-CO2/COX2). Interacts specifically with newly synthesized MT-CO2/COX and its copper center-forming metallochaperones SCO1, SCO2 and COA6. Probably facilitates MT-CO2/COX2 association with the MITRAC assembly intermediate containing MT-CO1/COX1, thereby participating in merging the MT-CO1/COX1 and MT-CO2/COX2 assembly lines. In Mus musculus (Mouse), this protein is Cytochrome c oxidase assembly protein COX16 homolog, mitochondrial.